The following is a 930-amino-acid chain: F-box only protein 11 (930 aa).

Residues 1-150 form a disordered region; it reads MNSVRAANRR…RVSGKSQDLS (150 aa). The segment covering 7–16 has biased composition (basic residues); sequence ANRRPRRVSR. Residues 17 to 27 are compositionally biased toward low complexity; sequence PRPVQQQQQQP. Residues 28–73 show a composition bias toward pro residues; that stretch reads PQQPPPQPPQQQPPPQPPQQPPQQQPPPPPQQQPPPPPPPPPPPPQ. Positions 117–132 are enriched in polar residues; the sequence is PTKSSMEGASTSTTEN. The region spanning 156-202 is the F-box domain; that stretch reads QYLQEKLPDEVVLKIFSYLLEQDLCRAACVCKRFSELANDPILWKRL. PbH1 repeat units lie at residues 398–420, 421–443, 444–466, 467–489, 490–512, 513–535, 536–558, 559–581, 582–604, 605–627, 628–650, 651–673, 674–696, 697–719, 720–742, 743–765, 766–788, 789–811, and 812–833; these read GACP…YITD, HAQG…WVKN, HGNP…FTFD, HGMG…EVKA, YANP…YVHE, KGRG…WITS, NSDP…YIFG, DGRG…QIRT, NSCP…YVHE, KGQG…WVTT, GSTP…YFYD, NGHG…QIRT, GSNP…LVYN, SGLG…WIKT, DSNP…CIFN, GGRG…LIST, NSHP…EITN, HATA…FLAS, and GVNV…EKAV. The segment at 836-907 adopts a UBR-type zinc-finger fold; it reads GQCLYKISSY…LSNPCTLAGE (72 aa).

Component of the SCF(FBXO11) complex consisting of CUL1, RBX1, SKP1 and FBXO11. Interacts with CIITA. In terms of tissue distribution, at 9.5 dpc and 10.5 dpc, expression is restricted to developing heart tissue. By 11.5 dpc and 12.5 dpc, detected in liver and subsequently in muscle by 13.5 dpc. At 14.5 dpc, still detected in heart, liver and muscle and also in the developing secondary palate including the nasal, medial and oral epithelia of the palatal shelves. At 15.5 dpc and 16.5 dpc, expressed in lung, kidney, heart, liver, muscle and adrenal gland. At this time, fusion of the palate shelves has occurred, with expression confined to the nasal and oral epithelia. At 17.5 dpc, expression in the lung is confined to bronchial epithelial cells and is evident in bone marrow, skin, tissue macrophages, osteoblasts, kidney, liver and spleen. At 18.5 dpc, expressed in bone marrow, liver, kidney and muscle but decreases in heart and lung. At this time, first detected in the middle ear epithelium. At the newborn stage, expression is strong in the middle ear where it is confined to mucin-secreting cells, as well as persisting in bone marrow, kidney and liver. Middle ear expression persists in postnatal head tissue at 4 and 13 days after birth and has declined by 21 days after birth. In the adult, expression is seen in alveolar macrophages of the lung, glomeruli and collecting tubules of the kidney, midbrain, heart and muscle.

Its subcellular location is the nucleus. It is found in the chromosome. The protein operates within protein modification; protein ubiquitination. Its function is as follows. Substrate recognition component of a SCF (SKP1-CUL1-F-box protein) E3 ubiquitin-protein ligase complex which mediates the ubiquitination and subsequent proteasomal degradation of target proteins, such as DTL/CDT2, BCL6, SNAI1 and PRDM1/BLIMP1. The SCF(FBXO11) complex mediates ubiquitination and degradation of BCL6, thereby playing a role in the germinal center B-cells terminal differentiation toward memory B-cells and plasma cells. The SCF(FBXO11) complex also mediates ubiquitination and degradation of DTL, an important step for the regulation of TGF-beta signaling, cell migration and the timing of the cell-cycle progression and exit. The SCF(FBXO11) complex also catalyzes ubiquitination and degradation of GSK3B-phosphorylated SNAI1. Binds to and neddylates phosphorylated p53/TP53, inhibiting its transcriptional activity. Plays a role in the regulatiom of erythropoiesis but not myelopoiesis or megakaryopoiesis. Mechanistically, activates erythroid genes by mediating the degradation of BAHD1, a heterochromatin-associated protein that recruits corepressors to H3K27me3 marks. Participates in macrophage cell death and inflammation in response to bacterial toxins by regulating the expression of complement 5a receptor 1/C5AR1 and IL-1beta. Acts as a critical regulator to determine the level of MHC-II by mediating the recognition of degron at the P/S/T domain of CIITA leading to its ubiquitination and subsequent degradation via the proteasome. Participates in the antiviral repsonse by initiating the activation of TBK1-IRF3-IFN-I axis. Mediates the 'Lys-63'-linked ubiquitination of TRAF3 to strengthen the interaction between TRAF3 and TBK1. The polypeptide is F-box only protein 11 (Mus musculus (Mouse)).